Here is a 137-residue protein sequence, read N- to C-terminus: 5-hydroxytryptamine receptor 4 (137 aa).

The chain crosses the membrane as a helical span at residues Thr12–Ile35. Asn58 carries an N-linked (GlcNAc...) asparagine glycan. The helical transmembrane segment at Asn67–Tyr90 threads the bilayer. Residues Ala112–Lys137 form a disordered region.

Belongs to the G-protein coupled receptor 1 family. Interacts (via C-terminus 330-346 AA) with GRK5; this interaction is promoted by 5-HT (serotonin).

The protein localises to the cell membrane. The protein resides in the endosome membrane. Functionally, G-protein coupled receptor for 5-hydroxytryptamine (serotonin), a biogenic hormone that functions as a neurotransmitter, a hormone and a mitogen. Ligand binding causes a conformation change that triggers signaling via guanine nucleotide-binding proteins (G proteins) and modulates the activity of downstream effectors. HTR4 is coupled to G(s) G alpha proteins and mediates activation of adenylate cyclase activity. The chain is 5-hydroxytryptamine receptor 4 (HTR4) from Sus scrofa (Pig).